Consider the following 469-residue polypeptide: Trigger factor (469 aa).

The 82-residue stretch at 162 to 243 folds into the PPIase FKBP-type domain; the sequence is GDFVSIDLSA…VKSVKERELP (82 aa). The segment at 429 to 469 is disordered; that stretch reads NTIDTSEFFGKHAQSDKADQKTEEADPNSDAIDEEVDEAAE. Over residues 437-452 the composition is skewed to basic and acidic residues; it reads FGKHAQSDKADQKTEE. A compositionally biased stretch (acidic residues) spans 453-469; sequence ADPNSDAIDEEVDEAAE.

Belongs to the FKBP-type PPIase family. Tig subfamily.

It localises to the cytoplasm. The catalysed reaction is [protein]-peptidylproline (omega=180) = [protein]-peptidylproline (omega=0). Functionally, involved in protein export. Acts as a chaperone by maintaining the newly synthesized protein in an open conformation. Functions as a peptidyl-prolyl cis-trans isomerase. The sequence is that of Trigger factor from Mycobacterium leprae (strain Br4923).